Here is a 396-residue protein sequence, read N- to C-terminus: NAD(P)H oxidoreductase RTN4IP1, mitochondrial (396 aa).

A mitochondrion-targeting transit peptide spans 1–40 (MGVLKTCVLRRSACAAACFWRRTVIPKPPFRGISTTSARS). The Enoyl reductase (ER) domain maps to 52–393 (GKNEVLRFTQ…RGHARGKTVV (342 aa)). Residues Ser-214, Gly-216, Val-217, Ser-237, Tyr-255, Asn-276, Leu-300, Ala-341, Phe-343, His-386, Ala-387, and Arg-388 each contribute to the NADPH site.

The protein belongs to the zinc-containing alcohol dehydrogenase family. Quinone oxidoreductase subfamily. In terms of assembly, interacts with RTN4, UQCRC1 and UQCRC2. As to expression, widely expressed in mitochondria-enriched tissues. Found in heart, kidney, liver, brain and spinal cord.

It localises to the mitochondrion matrix. The protein resides in the mitochondrion outer membrane. It catalyses the reaction a 3-demethylubiquinone + NADH + 2 H(+) = a 3-demethylubiquinol + NAD(+). It carries out the reaction a 3-demethylubiquinone + NADPH + 2 H(+) = a 3-demethylubiquinol + NADP(+). The enzyme catalyses 3-demethylubiquinone-10 + NADH + 2 H(+) = 3-demethylubiquinol-10 + NAD(+). The catalysed reaction is 3-demethylubiquinone-10 + NADPH + 2 H(+) = 3-demethylubiquinol-10 + NADP(+). It participates in cofactor biosynthesis; ubiquinone biosynthesis. NAD(P)H oxidoreductase involved in the ubiquinone biosynthetic pathway. Required for the O-methyltransferase activity of COQ3. Able to catalyze the oxidoreduction of 3-demethylubiquinone into 3-demethylubiquinol in vitro. However, it is unclear if 3-demethylubiquinone constitutes a substrate in vivo. May also play a role in the regulation of retinal ganglion cell (RGC) neurite outgrowth, and hence in the development of the inner retina and optic nerve. Appears to be a potent inhibitor of regeneration following spinal cord injury. The chain is NAD(P)H oxidoreductase RTN4IP1, mitochondrial from Mus musculus (Mouse).